We begin with the raw amino-acid sequence, 275 residues long: Transmembrane protein 106B (275 aa).

Residues 1 to 24 (MGKSLSHLPLHSNKEDGYDGVTST) form a disordered region. A lipid anchor (N-myristoyl glycine) is attached at glycine 2. Over 2–97 (GKSLSHLPLH…QRLRPRRTKL (96 aa)) the chain is Cytoplasmic. Serine 34 carries the phosphoserine modification. The chain crosses the membrane as a helical span at residues 98 to 118 (YVMASVFVCLLLSGLAVFFLF). Topologically, residues 119 to 275 (PRSIDVKYIG…EYLNVLQPQQ (157 aa)) are lumenal. N-linked (GlcNAc...) asparagine glycosylation is found at asparagine 146, asparagine 152, asparagine 165, and asparagine 184. Cysteine 215 and cysteine 254 form a disulfide bridge. N-linked (GlcNAc...) asparagine glycosylation occurs at asparagine 257.

It belongs to the TMEM106 family. As to quaternary structure, can form homomers. Interacts (via N-terminus) with MAP6 (via C-terminus). Interacts (via C-terminus) with the vacuolar-type ATPase subunit ATP6AP1. Interacts (via N-terminus) with AP2M1 and CLTC. Interacts with TMEM106C. As to expression, expressed in cortical neurons (at protein level).

It localises to the late endosome membrane. The protein localises to the lysosome membrane. It is found in the cell membrane. Involved in dendrite morphogenesis and maintenance by regulating lysosomal trafficking. May act as a molecular brake for retrograde transport of late endosomes/lysosomes, possibly via its interaction with MAP6. In neurons, may also play a role in the regulation of lysosomal size and responsiveness to stress. Required for proper lysosomal acidification. Its function is as follows. In neurons, involved in the transport of late endosomes/lysosomes. May be involved in dendrite morphogenesis and maintenance by regulating lysosomal trafficking. May act as a molecular brake for retrograde transport of late endosomes/lysosomes, possibly via its interaction with MAP6. In motoneurons, may mediate the axonal transport of lysosomes and axonal sorting at the initial segment. It remains unclear whether TMEM106B affects the transport of moving lysosomes in the anterograde or retrograde direction in neurites and whether it is particularly important in the sorting of lysosomes in axons or in dendrites. In neurons, may also play a role in the regulation of lysosomal size and responsiveness to stress. Required for proper lysosomal acidification. The protein is Transmembrane protein 106B (Tmem106b) of Rattus norvegicus (Rat).